Here is a 483-residue protein sequence, read N- to C-terminus: Probable cytosol aminopeptidase (483 aa).

The Mn(2+) site is built by Lys252 and Asp257. Residue Lys264 is part of the active site. Positions 275, 334, and 336 each coordinate Mn(2+). Arg338 is an active-site residue.

It belongs to the peptidase M17 family. The cofactor is Mn(2+).

Its subcellular location is the cytoplasm. The catalysed reaction is Release of an N-terminal amino acid, Xaa-|-Yaa-, in which Xaa is preferably Leu, but may be other amino acids including Pro although not Arg or Lys, and Yaa may be Pro. Amino acid amides and methyl esters are also readily hydrolyzed, but rates on arylamides are exceedingly low.. It carries out the reaction Release of an N-terminal amino acid, preferentially leucine, but not glutamic or aspartic acids.. Functionally, presumably involved in the processing and regular turnover of intracellular proteins. Catalyzes the removal of unsubstituted N-terminal amino acids from various peptides. The protein is Probable cytosol aminopeptidase of Legionella pneumophila (strain Paris).